Consider the following 243-residue polypeptide: Toxin CcTX-1 (243 aa).

Residues 1–25 (SSPEKKNDMSKPGRMRFDNKKEPRS) are compositionally biased toward basic and acidic residues. Positions 1–48 (SSPEKKNDMSKPGRMRFDNKKEPRSSAKNSGNGYGCVDVNAGREPLTG) are disordered.

In terms of processing, contains disulfide bonds. As to expression, nematocytes.

Its subcellular location is the secreted. The protein resides in the nematocyst. It is found in the target cell membrane. Its function is as follows. Has potent hemolytic activity. Is lethal to crayfish. Causes cutaneous inflammation in humans. May act as a pore-forming toxin, disrupting normal transmembrane ion concentration gradients in susceptible cells. This is Toxin CcTX-1 from Cyanea capillata (Lion's mane jellyfish).